The primary structure comprises 352 residues: Large ribosomal subunit protein uL10 (352 aa).

Acidic residues predominate over residues 286–297 (DDEDALPEELQD). The disordered stretch occupies residues 286–352 (DDEDALPEEL…GAEGLGEMFG (67 aa)). Residues 299–310 (DAPAAPAGGEAD) show a composition bias toward low complexity. Positions 324–340 (EADDADDSDDDDDDDDG) are enriched in acidic residues. A compositionally biased stretch (gly residues) spans 343 to 352 (GAEGLGEMFG).

Belongs to the universal ribosomal protein uL10 family. As to quaternary structure, part of the 50S ribosomal subunit. Forms part of the ribosomal stalk which helps the ribosome interact with GTP-bound translation factors. Forms a heptameric L10(L12)2(L12)2(L12)2 complex, where L10 forms an elongated spine to which the L12 dimers bind in a sequential fashion.

Forms part of the ribosomal stalk, playing a central role in the interaction of the ribosome with GTP-bound translation factors. The sequence is that of Large ribosomal subunit protein uL10 from Halobacterium salinarum (strain ATCC 700922 / JCM 11081 / NRC-1) (Halobacterium halobium).